A 92-amino-acid chain; its full sequence is Large ribosomal subunit protein uL23 (92 aa).

The protein belongs to the universal ribosomal protein uL23 family. As to quaternary structure, part of the 50S ribosomal subunit. Contacts protein L29, and trigger factor when it is bound to the ribosome.

One of the early assembly proteins it binds 23S rRNA. One of the proteins that surrounds the polypeptide exit tunnel on the outside of the ribosome. Forms the main docking site for trigger factor binding to the ribosome. This Bdellovibrio bacteriovorus (strain ATCC 15356 / DSM 50701 / NCIMB 9529 / HD100) protein is Large ribosomal subunit protein uL23.